A 569-amino-acid polypeptide reads, in one-letter code: Potassium-transporting ATPase potassium-binding subunit (569 aa).

The next 10 helical transmembrane spans lie at 11–31 (LLLA…ACVF), 64–84 (LAYT…LYGI), 135–155 (AGLA…ALAV), 179–199 (LYLL…MGIP), 258–278 (FNIL…GKMV), 285–305 (WALI…VYIA), 384–404 (GLYG…LMVG), 423–443 (MLAV…AAVL), 490–510 (LGIS…AIAG), and 531–551 (LFVG…YFPA).

Belongs to the KdpA family. As to quaternary structure, the system is composed of three essential subunits: KdpA, KdpB and KdpC.

It is found in the cell inner membrane. Functionally, part of the high-affinity ATP-driven potassium transport (or Kdp) system, which catalyzes the hydrolysis of ATP coupled with the electrogenic transport of potassium into the cytoplasm. This subunit binds the periplasmic potassium ions and delivers the ions to the membrane domain of KdpB through an intramembrane tunnel. The polypeptide is Potassium-transporting ATPase potassium-binding subunit (Allorhizobium ampelinum (strain ATCC BAA-846 / DSM 112012 / S4) (Agrobacterium vitis (strain S4))).